A 335-amino-acid polypeptide reads, in one-letter code: Ubiquinol oxidase 1b, mitochondrial (335 aa).

A mitochondrion-targeting transit peptide spans 1 to 47; that stretch reads MSSRMAGATLLRHLGPRLFAAEPVYSGLAASARGVMPAAARIFPARM. Residues 160–180 traverse the membrane as a helical segment; that stretch reads ALLLETVAGVPGMVGGMLLHL. Positions 164, 203, and 206 each coordinate Fe cation. The chain crosses the membrane as a helical span at residues 222 to 242; sequence ALVLAAQGVFFNAYFVGYLVS. The Fe cation site is built by glutamate 254, glutamate 305, and histidine 308.

The protein belongs to the alternative oxidase family. It depends on Fe cation as a cofactor.

The protein localises to the mitochondrion inner membrane. The enzyme catalyses 2 a ubiquinol + O2 = 2 a ubiquinone + 2 H2O. Functionally, catalyzes the cyanide-resistant oxidation of ubiquinol and the reduction of molecular oxygen to water, but does not translocate protons and consequently is not linked to oxidative phosphorylation. May increase respiration when the cytochrome respiratory pathway is restricted, or in response to low temperatures. In Oryza sativa subsp. japonica (Rice), this protein is Ubiquinol oxidase 1b, mitochondrial.